Reading from the N-terminus, the 365-residue chain is Chorismate synthase (365 aa).

NADP(+)-binding residues include R48 and R54. FMN contacts are provided by residues 125–127 (RSS), 238–239 (NA), G278, 293–297 (KPTSS), and R319.

This sequence belongs to the chorismate synthase family. In terms of assembly, homotetramer. It depends on FMNH2 as a cofactor.

It catalyses the reaction 5-O-(1-carboxyvinyl)-3-phosphoshikimate = chorismate + phosphate. It participates in metabolic intermediate biosynthesis; chorismate biosynthesis; chorismate from D-erythrose 4-phosphate and phosphoenolpyruvate: step 7/7. Catalyzes the anti-1,4-elimination of the C-3 phosphate and the C-6 proR hydrogen from 5-enolpyruvylshikimate-3-phosphate (EPSP) to yield chorismate, which is the branch point compound that serves as the starting substrate for the three terminal pathways of aromatic amino acid biosynthesis. This reaction introduces a second double bond into the aromatic ring system. The protein is Chorismate synthase of Vesicomyosocius okutanii subsp. Calyptogena okutanii (strain HA).